We begin with the raw amino-acid sequence, 177 residues long: Cell division protein ZapC (177 aa).

This sequence belongs to the ZapC family. Interacts directly with FtsZ.

The protein localises to the cytoplasm. In terms of biological role, contributes to the efficiency of the cell division process by stabilizing the polymeric form of the cell division protein FtsZ. Acts by promoting interactions between FtsZ protofilaments and suppressing the GTPase activity of FtsZ. The chain is Cell division protein ZapC from Shewanella frigidimarina (strain NCIMB 400).